Reading from the N-terminus, the 419-residue chain is Putative BTB/POZ domain-containing protein L85 (419 aa).

A BTB domain is found at 16–89; it reads TDLTIVLKDD…FYDKTSTNSE (74 aa). Residues 250–290 form a disordered region; sequence SSSNDSDEDASETESEHNSETESEHNSETESEHNSETESKH. Positions 263–290 are enriched in basic and acidic residues; the sequence is ESEHNSETESEHNSETESEHNSETESKH.

The protein belongs to the mimivirus BTB/WD family.

The polypeptide is Putative BTB/POZ domain-containing protein L85 (Acanthamoeba polyphaga (Amoeba)).